The primary structure comprises 126 residues: Acidic phospholipase A2 S1E6-b (126 aa).

An N-terminal signal peptide occupies residues V1–G3. 7 cysteine pairs are disulfide-bonded: C29-C119, C31-C47, C46-C98, C52-C126, C53-C91, C60-C84, and C78-C89. The Ca(2+) site is built by Y30, G32, and G34. The active site involves H50. D51 provides a ligand contact to Ca(2+). D92 is a catalytic residue.

As to quaternary structure, homodimer. It depends on Ca(2+) as a cofactor. In terms of tissue distribution, expressed by the venom gland.

Its subcellular location is the secreted. The catalysed reaction is a 1,2-diacyl-sn-glycero-3-phosphocholine + H2O = a 1-acyl-sn-glycero-3-phosphocholine + a fatty acid + H(+). Snake venom phospholipase that inhibits ADP-induced platelet aggregation. PLA2 catalyzes the calcium-dependent hydrolysis of the 2-acyl groups in 3-sn-phosphoglycerides. This chain is Acidic phospholipase A2 S1E6-b, found in Calloselasma rhodostoma (Malayan pit viper).